Reading from the N-terminus, the 357-residue chain is MLVLGIETTCDETAAAVVERHADGSALILSNIVRSQTGEHAPYGGVVPEIAARAHVDMLDGIIASAMKQSGVGFPRLSGVAAAAGPGLIGGVIVGLTTAKAIALVHRTPLIAVNHLEAHALTPRLTSALEFPYCLFLASGGHTQIVAVLGVGNYVRLGTTVDDAMGEAFDKVAKMLGLPYPGGPQVERAAADGDAKRFNFPRPMLGRPDANFSLSGLKTAVRNEAGRIDPLRPRDINDLCAGFQAAVLEATADRLGVGLELFRERFGTPRALVAAGGVAANQAIRGALEGVAARAQTMLIIPPPALCTDNGAMIAWAGAERLAAGLTDTLEAPPRARWLLDANAHAPAGFANTRAGF.

Residues H115 and H119 each coordinate Fe cation. Residues 137-141 (LASGG), D170, G183, and N281 contribute to the substrate site. D309 contributes to the Fe cation binding site.

Belongs to the KAE1 / TsaD family. It depends on Fe(2+) as a cofactor.

It localises to the cytoplasm. It catalyses the reaction L-threonylcarbamoyladenylate + adenosine(37) in tRNA = N(6)-L-threonylcarbamoyladenosine(37) in tRNA + AMP + H(+). Its function is as follows. Required for the formation of a threonylcarbamoyl group on adenosine at position 37 (t(6)A37) in tRNAs that read codons beginning with adenine. Is involved in the transfer of the threonylcarbamoyl moiety of threonylcarbamoyl-AMP (TC-AMP) to the N6 group of A37, together with TsaE and TsaB. TsaD likely plays a direct catalytic role in this reaction. The polypeptide is tRNA N6-adenosine threonylcarbamoyltransferase (Nitrobacter hamburgensis (strain DSM 10229 / NCIMB 13809 / X14)).